Reading from the N-terminus, the 320-residue chain is Cytochrome f (320 aa).

The signal sequence occupies residues methionine 1–alanine 35. Heme is bound by residues tyrosine 36, cysteine 56, cysteine 59, and histidine 60. Residues valine 286 to lysine 306 form a helical membrane-spanning segment.

It belongs to the cytochrome f family. As to quaternary structure, the 4 large subunits of the cytochrome b6-f complex are cytochrome b6, subunit IV (17 kDa polypeptide, petD), cytochrome f and the Rieske protein, while the 4 small subunits are PetG, PetL, PetM and PetN. The complex functions as a dimer. Requires heme as cofactor.

Its subcellular location is the plastid. It localises to the chloroplast thylakoid membrane. Its function is as follows. Component of the cytochrome b6-f complex, which mediates electron transfer between photosystem II (PSII) and photosystem I (PSI), cyclic electron flow around PSI, and state transitions. This chain is Cytochrome f, found in Lepidium virginicum (Virginia pepperweed).